A 764-amino-acid polypeptide reads, in one-letter code: Mitogen-activated protein kinase kinase kinase 1b (764 aa).

Disordered regions lie at residues 1 to 81, 120 to 260, 325 to 348, and 360 to 392; these read MVEE…IQQQ, KSIA…TATR, PNLA…SSAM, and VPEL…HYGS. The span at 14-30 shows a compositional bias: gly residues; that stretch reads GSWGSGEDGGSSHGGKG. Composition is skewed to low complexity over residues 60–76 and 125–135; these read VHST…LSKS and SQPLSSPSLSQ. Over residues 136 to 145 the composition is skewed to basic and acidic residues; it reads EHGEASHSND. A compositionally biased stretch (polar residues) spans 184–201; that stretch reads YVNSQPQNHYGRKNSPSQ. The region spanning 431-684 is the Protein kinase domain; the sequence is WFKGDFIGSG…CDMLLTHPFI (254 aa). ATP-binding positions include 437–445 and Lys459; that span reads IGSGTFGSV. The Proton acceptor role is filled by Asp554. Positions 706 to 764 are disordered; that stretch reads EERSIDVSESPSIATSSQSGSSPSVAGDAVSPASVAVRPRSMRTLRSEFSMSSPESIAS. Residues 715 to 729 are compositionally biased toward low complexity; it reads SPSIATSSQSGSSPS. The segment covering 752–764 has biased composition (polar residues); it reads SEFSMSSPESIAS.

It belongs to the protein kinase superfamily. STE Ser/Thr protein kinase family. MAP kinase kinase kinase subfamily.

It is found in the cell membrane. It carries out the reaction L-seryl-[protein] + ATP = O-phospho-L-seryl-[protein] + ADP + H(+). The enzyme catalyses L-threonyl-[protein] + ATP = O-phospho-L-threonyl-[protein] + ADP + H(+). Its function is as follows. The CERK1, MEKK1a/b, MKK1a/b/c and MPK4a/b proteins are involved in pathogen defense. The pathway induces rapid growth inhibition, cell wall depositions and accumulation of defense-related transcripts. This protein is required for responses to chitin and acts redundantly with MEKK1a. The polypeptide is Mitogen-activated protein kinase kinase kinase 1b (MEKK1b) (Physcomitrium patens (Spreading-leaved earth moss)).